The following is a 705-amino-acid chain: Kinesin-like protein KIF2A (705 aa).

The globular stretch occupies residues 1 to 216; sequence MATANFGKIQ…LDYRPLTTAD (216 aa). Residues 65-186 are disordered; sequence DLVPDEDIEP…QELREKRAQD (122 aa). Residue Ser-75 is modified to Phosphoserine. At Thr-96 the chain carries Phosphothreonine. Lys-101 carries the post-translational modification N6-acetyllysine. Positions 122–139 are enriched in polar residues; that stretch reads LPEQSSSAQQNGSVSDIS. Phosphoserine occurs at positions 134 and 139. A compositionally biased stretch (basic and acidic residues) spans 158-186; that stretch reads CVKEVEKLQEKREKRRLQQQELREKRAQD. The Kinesin motor domain occupies 222 to 552; that stretch reads RICVCVRKRP…LRYANRVKEL (331 aa). 312 to 319 lines the ATP pocket; that stretch reads GQTGSGKT. Phosphoserine is present on residues Thr-528 and Tyr-545. Positions 659–698 form a coiled coil; sequence ATQLEAILEQKIDILTELRDKVKSFRAALQEEEQASKQIN.

The protein belongs to the TRAFAC class myosin-kinesin ATPase superfamily. Kinesin family. MCAK/KIF2 subfamily. As to quaternary structure, interacts with AURKA and PLK1. Interacts with PSRC1. Interacts with MCRS1; the interaction enhances recruitment of KIF2A to the minus ends of spindle microtubules which promotes chromosome alignment. Highest level in lung. High level in ovary, moderate levels in heart, kidney, placenta, skeletal muscle and spleen (at protein level). Pancreas and spleen express a shorter isoform (at protein level). Expressed in the flagellum of elongated spermatids and sperm in the testis lumen (at protein level). Isoform 1 expressed in neuronal cells. Isoform 2 expressed in astrocytes and fibroblasts.

The protein resides in the cytoplasm. Its subcellular location is the cytoskeleton. It localises to the microtubule organizing center. It is found in the centrosome. The protein localises to the spindle pole. The protein resides in the spindle. Its subcellular location is the lysosome. In terms of biological role, plus end-directed microtubule-dependent motor required for normal brain development. May regulate microtubule dynamics during axonal growth. Required for normal progression through mitosis. Required for normal congress of chromosomes at the metaphase plate. Required for normal spindle dynamics during mitosis. Promotes spindle turnover. Implicated in formation of bipolar mitotic spindles. Has microtubule depolymerization activity. In Mus musculus (Mouse), this protein is Kinesin-like protein KIF2A (Kif2a).